Here is a 234-residue protein sequence, read N- to C-terminus: Ribitol-5-phosphate cytidylyltransferase (234 aa).

Residues 7-10 (LAGG) and 79-85 (GSIVQKS) each bind CTP.

The protein belongs to the IspD/TarI cytidylyltransferase family. TarI subfamily.

It catalyses the reaction D-ribitol 5-phosphate + CTP + H(+) = CDP-L-ribitol + diphosphate. Its pathway is cell wall biogenesis; poly(ribitol phosphate) teichoic acid biosynthesis. Catalyzes the transfer of the cytidylyl group of CTP to D-ribitol 5-phosphate. This is Ribitol-5-phosphate cytidylyltransferase from Lacticaseibacillus paracasei (strain ATCC 334 / BCRC 17002 / CCUG 31169 / CIP 107868 / KCTC 3260 / NRRL B-441) (Lactobacillus paracasei).